Consider the following 225-residue polypeptide: Ribulose-phosphate 3-epimerase (225 aa).

Serine 9 lines the substrate pocket. A divalent metal cation is bound by residues histidine 34, aspartate 36, and histidine 68. Aspartate 36 acts as the Proton acceptor in catalysis. Substrate is bound by residues histidine 68, 144-147 (GFGG), 177-179 (DGG), and 199-200 (GS). A divalent metal cation is bound at residue aspartate 177. Aspartate 177 serves as the catalytic Proton donor.

The protein belongs to the ribulose-phosphate 3-epimerase family. A divalent metal cation is required as a cofactor.

The enzyme catalyses D-ribulose 5-phosphate = D-xylulose 5-phosphate. Its pathway is carbohydrate degradation. In terms of biological role, catalyzes the reversible epimerization of D-ribulose 5-phosphate to D-xylulose 5-phosphate. This Escherichia coli O157:H7 protein is Ribulose-phosphate 3-epimerase.